A 699-amino-acid chain; its full sequence is 1,4-alpha-glucan-branching enzyme (699 aa).

Substrate is bound by residues 59–60 (NE) and 88–90 (WAP). A (1,4-alpha-D-glucosyl)n-binding site is contributed by Trp104. 115–118 (DYGK) lines the substrate pocket. Lys140 is a (1,4-alpha-D-glucosyl)n binding site. A Phosphotyrosine modification is found at Tyr170. 330–333 (EVLR) contributes to the substrate binding site. The active-site Nucleophile is Asp354. Catalysis depends on Glu409, which acts as the Proton donor.

Belongs to the glycosyl hydrolase 13 family. GlgB subfamily. Monomer.

The enzyme catalyses Transfers a segment of a (1-&gt;4)-alpha-D-glucan chain to a primary hydroxy group in a similar glucan chain.. It participates in glycan biosynthesis; glycogen biosynthesis. Functionally, glycogen-branching enzyme participates in the glycogen biosynthetic process along with glycogenin and glycogen synthase. Generates alpha-1,6-glucosidic branches from alpha-1,4-linked glucose chains, to increase solubility of the glycogen polymer. This chain is 1,4-alpha-glucan-branching enzyme (GBE1), found in Felis catus (Cat).